We begin with the raw amino-acid sequence, 138 residues long: Acidic phospholipase A2 Ts-A1 (138 aa).

An N-terminal signal peptide occupies residues 1 to 16; that stretch reads MRTLWIMAVLQVGVEG. Cystine bridges form between Cys-42/Cys-131, Cys-44/Cys-60, Cys-59/Cys-111, Cys-65/Cys-138, Cys-66/Cys-104, Cys-73/Cys-97, and Cys-91/Cys-102. Residues Phe-43, Gly-45, and Gly-47 each coordinate Ca(2+). The active site involves His-63. Residue Asp-64 participates in Ca(2+) binding. Asp-105 is a catalytic residue.

Requires Ca(2+) as cofactor. As to expression, expressed by the venom gland.

Its subcellular location is the secreted. It carries out the reaction a 1,2-diacyl-sn-glycero-3-phosphocholine + H2O = a 1-acyl-sn-glycero-3-phosphocholine + a fatty acid + H(+). In terms of biological role, snake venom phospholipase A2 (PLA2) that shows a moderate inhibition of ADP-induced human platelet aggregation when tested on platelet rich plasma. Exhibits high hydrolytic activities and prefers the anionic micelles (dPPC with deoxycholate) to the zwitterionic micelles (dPPC with Triton X-100). PLA2 catalyzes the calcium-dependent hydrolysis of the 2-acyl groups in 3-sn-phosphoglycerides. This chain is Acidic phospholipase A2 Ts-A1, found in Trimeresurus stejnegeri (Chinese green tree viper).